Here is a 444-residue protein sequence, read N- to C-terminus: Maturase K (444 aa).

It belongs to the intron maturase 2 family. MatK subfamily.

It is found in the plastid. The protein localises to the chloroplast. In terms of biological role, usually encoded in the trnK tRNA gene intron. Probably assists in splicing its own and other chloroplast group II introns. The protein is Maturase K of Chamaecyparis lawsoniana (Lawson false cypress).